The sequence spans 108 residues: Urease subunit beta (108 aa).

The protein belongs to the urease beta subunit family. Heterotrimer of UreA (gamma), UreB (beta) and UreC (alpha) subunits. Three heterotrimers associate to form the active enzyme.

Its subcellular location is the cytoplasm. It catalyses the reaction urea + 2 H2O + H(+) = hydrogencarbonate + 2 NH4(+). Its pathway is nitrogen metabolism; urea degradation; CO(2) and NH(3) from urea (urease route): step 1/1. The protein is Urease subunit beta of Nocardia farcinica (strain IFM 10152).